Here is a 300-residue protein sequence, read N- to C-terminus: Ornithine carbamoyltransferase (300 aa).

Residues 49–52 (STRT), glutamine 76, arginine 100, and 127–130 (HPCQ) contribute to the carbamoyl phosphate site. L-ornithine contacts are provided by residues asparagine 158, aspartate 218, and 222-223 (SM). Residues 258–259 (CL) and arginine 286 each bind carbamoyl phosphate.

It belongs to the aspartate/ornithine carbamoyltransferase superfamily. OTCase family.

It is found in the cytoplasm. It carries out the reaction carbamoyl phosphate + L-ornithine = L-citrulline + phosphate + H(+). It functions in the pathway amino-acid biosynthesis; L-arginine biosynthesis; L-arginine from L-ornithine and carbamoyl phosphate: step 1/3. Reversibly catalyzes the transfer of the carbamoyl group from carbamoyl phosphate (CP) to the N(epsilon) atom of ornithine (ORN) to produce L-citrulline. The protein is Ornithine carbamoyltransferase of Nitratidesulfovibrio vulgaris (strain ATCC 29579 / DSM 644 / CCUG 34227 / NCIMB 8303 / VKM B-1760 / Hildenborough) (Desulfovibrio vulgaris).